A 75-amino-acid chain; its full sequence is Tautomerase PptA (75 aa).

Pro2 functions as the Proton acceptor; via imino nitrogen in the catalytic mechanism.

Belongs to the 4-oxalocrotonate tautomerase family. PptA subfamily. Homodimer.

The protein localises to the cytoplasm. The chain is Tautomerase PptA from Escherichia coli O127:H6 (strain E2348/69 / EPEC).